A 122-amino-acid chain; its full sequence is Large ribosomal subunit protein uL14 (122 aa).

This sequence belongs to the universal ribosomal protein uL14 family. As to quaternary structure, part of the 50S ribosomal subunit. Forms a cluster with proteins L3 and L19. In the 70S ribosome, L14 and L19 interact and together make contacts with the 16S rRNA in bridges B5 and B8.

In terms of biological role, binds to 23S rRNA. Forms part of two intersubunit bridges in the 70S ribosome. In Maricaulis maris (strain MCS10) (Caulobacter maris), this protein is Large ribosomal subunit protein uL14.